The primary structure comprises 109 residues: U16-hexatoxin-Hi1a (109 aa).

Positions 1–16 (LTGHLCCMMIWWQATQ) are cleaved as a signal peptide. Residues 17–43 (VISPPLPVIREENNSHKMGVSLFPLKR) constitute a propeptide that is removed on maturation.

In terms of processing, contains 2 disulfide bonds. As to expression, expressed by the venom gland.

The protein localises to the secreted. Probable ion channel inhibitor. The chain is U16-hexatoxin-Hi1a from Hadronyche infensa (Fraser island funnel-web spider).